The chain runs to 429 residues: MTQMEEAKRGVITEEMKKIAKIEKIDPEKLRRSVAKGHTVIFRNVNHDWVVPVAVGQGVRVKVNANIGTSRDIVNVEEEIEKAKIAVKYGADTIMDLSTGGDLDFIRRKIMKAVNVPVGTVPIYQAAEEMLARGKAIIEMTEDDMWKAVEKHFKDGVDFVTIHAGVTKEVVEKLKRVNRVVGMVSRGGTFLAAWILHWGEENPFYKNYEYLLELAKEYDVVLSLGDGLRPGGLPDAGDELQIAELYTIGRLVKRAREFGVQTMVEGPGHVPIDQIPTHIRLMKIASDNAPVYVLGPIVTDIFPGYDHISAAIGGAIAALNGADFLCYVTPAEHLGLPTIEHVKEGVIATKIAAHAVNLTRFEEDFKIDYQMSLARGKLNWKEQFKIAFDKEKFIEIRKERPTKSEACSMCGDLCAIKIVREMLGHKARS.

Substrate contacts are provided by residues N66, M95, Y124, H163, 185-187, 226-229, and E265; these read SRG and DGLR. Zn(2+) is bound at residue H269. Y292 provides a ligand contact to substrate. H333 serves as a coordination point for Zn(2+). C407, C410, and C414 together coordinate [4Fe-4S] cluster.

This sequence belongs to the ThiC family. The cofactor is [4Fe-4S] cluster.

It carries out the reaction 5-amino-1-(5-phospho-beta-D-ribosyl)imidazole + S-adenosyl-L-methionine = 4-amino-2-methyl-5-(phosphooxymethyl)pyrimidine + CO + 5'-deoxyadenosine + formate + L-methionine + 3 H(+). It participates in cofactor biosynthesis; thiamine diphosphate biosynthesis. Functionally, catalyzes the synthesis of the hydroxymethylpyrimidine phosphate (HMP-P) moiety of thiamine from aminoimidazole ribotide (AIR) in a radical S-adenosyl-L-methionine (SAM)-dependent reaction. This chain is Phosphomethylpyrimidine synthase, found in Pyrococcus furiosus (strain ATCC 43587 / DSM 3638 / JCM 8422 / Vc1).